Reading from the N-terminus, the 683-residue chain is Leucine zipper putative tumor suppressor 2 homolog (683 aa).

Disordered regions lie at residues 1–37 (MAALQALPLSIDQNAEVSGSQSHTNTRSPVTENTMGS), 82–107 (YSSQDPLFNGLPTKKPSTTTSGNNGN), and 262–320 (MGHI…CDRS). 2 stretches are compositionally biased toward polar residues: residues 11 to 37 (IDQNAEVSGSQSHTNTRSPVTENTMGS) and 96 to 107 (KPSTTTSGNNGN). Low complexity predominate over residues 290–308 (SDSGRSSSSKSTGSLSGRG). A coiled-coil region spans residues 324 to 665 (SDEILIRELE…LELEARELDE (342 aa)).

This sequence belongs to the LZTS2 family.

The protein resides in the cytoplasm. Its subcellular location is the cytoskeleton. The protein localises to the microtubule organizing center. It localises to the centrosome. Its function is as follows. Negative regulator of katanin-mediated microtubule severing and release from the centrosome. Required for central spindle formation and the completion of cytokinesis. Negative regulator of the Wnt signaling pathway. Represses beta-catenin-mediated transcriptional activation by promoting the nuclear exclusion of beta-catenin. The protein is Leucine zipper putative tumor suppressor 2 homolog (lzts2) of Xenopus tropicalis (Western clawed frog).